Here is a 1028-residue protein sequence, read N- to C-terminus: MSDDKYHHDKHHDKHHIDSKQSTAAALSSSSTLASSSSMTTTTTTTSTTTTAASPITPKPRKNYPNSADQYELKETIGKGGSGLVQRAICLPFQENVAIKIIDLEHCKNVSLEEIRKEIQAMSLCHHPNVVAYHTSFVYNESLWVIMDFLSAGSCSDIMRFSFPQGFEEHVIATILKEALKAICYFHKTGRIHRDIKSGNILIDSNGNIQLSDFGVSATLIDTGETSRNTFVGTPCWMAPEIMEQVNYDYAVDIWSFGITALELARGKAPFAEYPPMKVLLLTLQNPPPSLEGDGESKWSHSFKDLVEKCLQKDPSKRPLPSKLLEHRFFKQAKKPDYLVQHILAKLPPLGQRYQMLSEDSFAMLRNTSSPQFDTGHSNSADEWIFPNENNDNNNSSTTTTTTTTTTTNPSNNNNNNNNKTKENLTQSPFETPSHTPSTSPGSTPSHSRTSTPTSNHTALGSSSTVVPPPVVPLTLPTAIPVTAAAYHQQQQHHHLSHSSGSIPNHNASSNLGASAHSNVHGLAHSSIHPTSSAASTTVVNNTQQPQTLQPPQQQHQLQQPIKTPSPINAINIVKLNQSDLITPPKTSPKKEGSIPSSSSHGNIPSLVTTSPKSPLQHQQQIPQQQQDPAMINSNNSSISSNGAYNRELISASGSALSKPPSPSSDKENNSTSKSNKSKSRQSSRASSLSESSDSTSHTSSSDEHSSRYESDRKSYKKKKSSSSSSNSKRDRERERDRDRSNKTYKNSRSRNVSRDRERERDRHNRSRDRDRERERERDRDRERDRDRSRDRSRDRSRDRERDRSRDRSRDRDRSRDRSRDRSRERDRDRSRDRSRDRSRSRDSDSRDRSRDRSRSHSNRRRSRSRDSRNKSRDRSSDSDRSRDRSRDRDYKSSKYKKSSRGTSGRKNNKIQSKLDSQATHISYLEDKISTLTNWLQQQNLLNTSNGQVLSPTDPNLVSKLQTQLDVLQSENSYLRNENINLKTIVNGSNSTNNSLNQSSGMAFRNSVSSLHQLNMSNSSNNSRPQTQ.

Residues 1 to 67 (MSDDKYHHDK…PKPRKNYPNS (67 aa)) are disordered. Positions 20 to 54 (KQSTAAALSSSSTLASSSSMTTTTTTTSTTTTAAS) are enriched in low complexity. One can recognise a Protein kinase domain in the interval 71 to 330 (YELKETIGKG…PSKLLEHRFF (260 aa)). ATP is bound by residues 77–85 (IGKGGSGLV) and Lys100. The active-site Proton acceptor is the Asp195. Thr230 carries the phosphothreonine; by autocatalysis modification. The segment covering 368–381 (TSSPQFDTGHSNSA) has biased composition (polar residues). 3 disordered regions span residues 368–467 (TSSP…STVV), 486–561 (AYHQ…LQQP), and 580–914 (DLIT…IQSK). Low complexity-rich tracts occupy residues 387-419 (PNENNDNNNSSTTTTTTTTTTTNPSNNNNNNNN) and 432-458 (TPSHTPSTSPGSTPSHSRTSTPTSNHT). Composition is skewed to polar residues over residues 503-518 (IPNHNASSNLGASAHS) and 528-542 (IHPTSSAASTTVVNN). Residues 543–561 (TQQPQTLQPPQQQHQLQQP) are compositionally biased toward low complexity. Residues 595 to 616 (IPSSSSHGNIPSLVTTSPKSPL) are compositionally biased toward polar residues. Composition is skewed to low complexity over residues 617 to 642 (QHQQQIPQQQQDPAMINSNNSSISSN) and 683 to 700 (SSRASSLSESSDSTSHTS). Basic and acidic residues-rich tracts occupy residues 701–714 (SSDEHSSRYESDRK), 728–742 (SKRDRERERDRDRSN), 753–855 (VSRD…DRSR), and 865–893 (SRDSRNKSRDRSSDSDRSRDRSRDRDYKS).

This sequence belongs to the protein kinase superfamily. STE Ser/Thr protein kinase family. STE20 subfamily. The cofactor is Mn(2+). Undergoes autophosphorylation in the catalytic domain.

The catalysed reaction is L-seryl-[protein] + ATP = O-phospho-L-seryl-[protein] + ADP + H(+). The enzyme catalyses L-threonyl-[protein] + ATP = O-phospho-L-threonyl-[protein] + ADP + H(+). The protein is Serine/threonine-protein kinase fray2 of Dictyostelium discoideum (Social amoeba).